Consider the following 276-residue polypeptide: MTLQQEIIRALGAKPHINAEEEIRRSVDFLKAYLKTYPFLKSLVLGISGGQDSTLTGKLCQTAITELREETGNDALQFIAVRLPFGVQADEQDCQDAIAFIQPDRVLTVNIKGAVLASEQALREAGIELSDFVRGNEKARERMKAQYSIAGMTNGVVVGTDHAAEAVTGFFTKYGDGGTDINPLFRLNKRQGKQLLAALGCPEHLYKKAPTADLEDDRPSLPDEAALGVTYDNIDDYLEGKTLDASIAKIIEGWYIRTEHKRRTPITVFDDFWKRS.

Residue 46-53 (GISGGQDS) coordinates ATP. Residue aspartate 52 participates in Mg(2+) binding. Residue arginine 140 coordinates deamido-NAD(+). Threonine 160 serves as a coordination point for ATP. Glutamate 165 lines the Mg(2+) pocket. Deamido-NAD(+) contacts are provided by lysine 173 and aspartate 180. Residues lysine 189 and threonine 211 each coordinate ATP. 260–261 (HK) contacts deamido-NAD(+).

The protein belongs to the NAD synthetase family. As to quaternary structure, homodimer.

The enzyme catalyses deamido-NAD(+) + NH4(+) + ATP = AMP + diphosphate + NAD(+) + H(+). The protein operates within cofactor biosynthesis; NAD(+) biosynthesis; NAD(+) from deamido-NAD(+) (ammonia route): step 1/1. Its function is as follows. Catalyzes the ATP-dependent amidation of deamido-NAD to form NAD. Uses ammonia as a nitrogen source. The protein is NH(3)-dependent NAD(+) synthetase of Citrobacter koseri (strain ATCC BAA-895 / CDC 4225-83 / SGSC4696).